Consider the following 186-residue polypeptide: Elongation factor P (186 aa).

It belongs to the elongation factor P family.

Its subcellular location is the cytoplasm. The protein operates within protein biosynthesis; polypeptide chain elongation. Functionally, involved in peptide bond synthesis. Stimulates efficient translation and peptide-bond synthesis on native or reconstituted 70S ribosomes in vitro. Probably functions indirectly by altering the affinity of the ribosome for aminoacyl-tRNA, thus increasing their reactivity as acceptors for peptidyl transferase. This Prochlorococcus marinus (strain SARG / CCMP1375 / SS120) protein is Elongation factor P.